A 177-amino-acid polypeptide reads, in one-letter code: MLEKLIERVLFATRWLLAPLCIAMSLVLVVLGYVFMKELWHMLSHLNTISETDLVLSALGLVDLLFMAGLVLMVLLASYESFVSKLDKVDASEITWLKHTDFNALKLKVSLSIVAISAIFLLKRYMSLEDVLSSIPKDTPLSHNPIFWQVVIHLVFVCSALLAAVTNNIAFSQNKAH.

3 helical membrane passes run 15-35 (WLLA…GYVF), 54-74 (LVLS…VLMV), and 145-165 (PIFW…LAAV).

This sequence belongs to the UPF0114 family.

It localises to the cell membrane. The protein is UPF0114 protein HP_0189 of Helicobacter pylori (strain ATCC 700392 / 26695) (Campylobacter pylori).